The chain runs to 188 residues: Elongation factor P (188 aa).

Residue lysine 34 is modified to N6-(3,6-diaminohexanoyl)-5-hydroxylysine.

Belongs to the elongation factor P family. Post-translationally, may be beta-lysylated on the epsilon-amino group of Lys-34 by the combined action of EpmA and EpmB, and then hydroxylated on the C5 position of the same residue by EpmC (if this protein is present). Lysylation is critical for the stimulatory effect of EF-P on peptide-bond formation. The lysylation moiety may extend toward the peptidyltransferase center and stabilize the terminal 3-CCA end of the tRNA. Hydroxylation of the C5 position on Lys-34 may allow additional potential stabilizing hydrogen-bond interactions with the P-tRNA.

It is found in the cytoplasm. It functions in the pathway protein biosynthesis; polypeptide chain elongation. In terms of biological role, involved in peptide bond synthesis. Alleviates ribosome stalling that occurs when 3 or more consecutive Pro residues or the sequence PPG is present in a protein, possibly by augmenting the peptidyl transferase activity of the ribosome. Modification of Lys-34 is required for alleviation. The polypeptide is Elongation factor P (Hamiltonella defensa subsp. Acyrthosiphon pisum (strain 5AT)).